The following is a 117-amino-acid chain: MNLSRNKARKVKQKRLRAKSELSRAASKPRLSVFKSHANFYAQLIDDQKRVTLASVSSLKSGKYGGNVAAAKELGLLMGQKILDLKLETVAFDRNGYLYHGRVKAFADAVREKGVKF.

Residues 1–17 (MNLSRNKARKVKQKRLR) show a composition bias toward basic residues. The interval 1 to 23 (MNLSRNKARKVKQKRLRAKSELS) is disordered.

The protein belongs to the universal ribosomal protein uL18 family. Part of the 50S ribosomal subunit; part of the 5S rRNA/L5/L18/L25 subcomplex. Contacts the 5S and 23S rRNAs.

Its function is as follows. This is one of the proteins that bind and probably mediate the attachment of the 5S RNA into the large ribosomal subunit, where it forms part of the central protuberance. The protein is Large ribosomal subunit protein uL18 of Mycoplasmopsis synoviae (strain 53) (Mycoplasma synoviae).